Reading from the N-terminus, the 511-residue chain is 2-isopropylmalate synthase (511 aa).

The Pyruvate carboxyltransferase domain occupies 4-266; the sequence is IRIFDTTLRD…ETGIDLSQLY (263 aa). Mn(2+) contacts are provided by D13, H201, H203, and N237. The tract at residues 391-511 is regulatory domain; sequence VLEKIRVVSG…IAANARAQKN (121 aa).

This sequence belongs to the alpha-IPM synthase/homocitrate synthase family. LeuA type 1 subfamily. In terms of assembly, homodimer. The cofactor is Mn(2+).

It localises to the cytoplasm. The catalysed reaction is 3-methyl-2-oxobutanoate + acetyl-CoA + H2O = (2S)-2-isopropylmalate + CoA + H(+). Its pathway is amino-acid biosynthesis; L-leucine biosynthesis; L-leucine from 3-methyl-2-oxobutanoate: step 1/4. Its function is as follows. Catalyzes the condensation of the acetyl group of acetyl-CoA with 3-methyl-2-oxobutanoate (2-ketoisovalerate) to form 3-carboxy-3-hydroxy-4-methylpentanoate (2-isopropylmalate). This Acetivibrio thermocellus (strain ATCC 27405 / DSM 1237 / JCM 9322 / NBRC 103400 / NCIMB 10682 / NRRL B-4536 / VPI 7372) (Clostridium thermocellum) protein is 2-isopropylmalate synthase.